The sequence spans 355 residues: Isopentenyl-diphosphate delta-isomerase (355 aa).

Residue 12–13 (RK) coordinates substrate. FMN-binding positions include Ser70, 71–73 (SMT), Ser101, and Asn130. A substrate-binding site is contributed by 101–103 (SMR). Gln165 serves as a coordination point for substrate. Position 166 (Glu166) interacts with Mg(2+). Residues Lys197 and 308–309 (AG) each bind FMN.

It belongs to the IPP isomerase type 2 family. Homooctamer. Dimer of tetramers. The cofactor is FMN. NADPH is required as a cofactor. Mg(2+) serves as cofactor.

The protein localises to the cytoplasm. The catalysed reaction is isopentenyl diphosphate = dimethylallyl diphosphate. In terms of biological role, involved in the biosynthesis of isoprenoids. Catalyzes the 1,3-allylic rearrangement of the homoallylic substrate isopentenyl (IPP) to its allylic isomer, dimethylallyl diphosphate (DMAPP). In Chlorobium phaeovibrioides (strain DSM 265 / 1930) (Prosthecochloris vibrioformis (strain DSM 265)), this protein is Isopentenyl-diphosphate delta-isomerase.